The chain runs to 201 residues: LexA repressor (201 aa).

A DNA-binding region (H-T-H motif) is located at residues Leu-28–Asp-48. Active-site for autocatalytic cleavage activity residues include Ser-120 and Lys-157.

Belongs to the peptidase S24 family. As to quaternary structure, homodimer.

The catalysed reaction is Hydrolysis of Ala-|-Gly bond in repressor LexA.. In terms of biological role, represses a number of genes involved in the response to DNA damage (SOS response), including recA and lexA. In the presence of single-stranded DNA, RecA interacts with LexA causing an autocatalytic cleavage which disrupts the DNA-binding part of LexA, leading to derepression of the SOS regulon and eventually DNA repair. The sequence is that of LexA repressor from Geotalea uraniireducens (strain Rf4) (Geobacter uraniireducens).